We begin with the raw amino-acid sequence, 1171 residues long: DNA-directed RNA polymerase subunit beta' (1171 aa).

4 residues coordinate Zn(2+): cysteine 60, cysteine 62, cysteine 75, and cysteine 78. The disordered stretch occupies residues glycine 299–methionine 319. Residues aspartate 449, aspartate 451, and aspartate 453 each contribute to the Mg(2+) site. Zn(2+) contacts are provided by cysteine 790, cysteine 864, cysteine 871, and cysteine 874.

This sequence belongs to the RNA polymerase beta' chain family. As to quaternary structure, the RNAP catalytic core consists of 2 alpha, 1 beta, 1 beta' and 1 omega subunit. When a sigma factor is associated with the core the holoenzyme is formed, which can initiate transcription. The cofactor is Mg(2+). It depends on Zn(2+) as a cofactor.

It carries out the reaction RNA(n) + a ribonucleoside 5'-triphosphate = RNA(n+1) + diphosphate. Functionally, DNA-dependent RNA polymerase catalyzes the transcription of DNA into RNA using the four ribonucleoside triphosphates as substrates. This Alkaliphilus metalliredigens (strain QYMF) protein is DNA-directed RNA polymerase subunit beta'.